The chain runs to 422 residues: F-box/WD repeat-containing protein 2 (422 aa).

Residues 54–101 form the F-box domain; the sequence is RDFLKLLPLELSFYLLKWLDPQTLLTCCLVSKQWNKVISACTEVWQTA. WD repeat units follow at residues 146–183, 185–221, 224–265, and 276–314; these read GHSA…CVYG, QTHT…RTQH, GHTG…NTLT, and LQKC…NCKC. An N6-acetyllysine modification is found at Lys298.

As to quaternary structure, directly interacts with SKP1 and CUL1. In terms of tissue distribution, widely expressed during embryogenesis and in adult tissues.

Substrate-recognition component of the SCF (SKP1-CUL1-F-box protein)-type E3 ubiquitin ligase complex. The sequence is that of F-box/WD repeat-containing protein 2 (Fbxw2) from Mus musculus (Mouse).